The sequence spans 103 residues: Protamine-2 (103 aa).

The interval Met-1 to His-103 is disordered. A phosphoserine mark is found at Ser-8 and Ser-10. Positions Ser-8–His-17 are enriched in basic and acidic residues. The segment covering Gly-18–Asn-29 has biased composition (low complexity). Basic residues predominate over residues His-48 to His-103.

The protein belongs to the protamine P2 family. Interacts with TDRP. In terms of processing, proteolytic processing into mature chains is required for histone eviction during spermatogenesis. Transition proteins (TNP1 and TNP2) are required for processing. As to expression, testis.

The protein resides in the nucleus. Its subcellular location is the chromosome. Its function is as follows. Protamines substitute for histones in the chromatin of sperm during the haploid phase of spermatogenesis. They compact sperm DNA into a highly condensed, stable and inactive complex. This is Protamine-2 (PRM2) from Macaca nemestrina (Pig-tailed macaque).